The primary structure comprises 480 residues: Chromosomal replication initiator protein DnaA (480 aa).

The domain I, interacts with DnaA modulators stretch occupies residues 1–71 (MKEFWQTCVS…EALAAEWYQR (71 aa)). The interval 71–142 (RPVQVTFELP…DAANIVYERS (72 aa)) is domain II. A domain III, AAA+ region region spans residues 143 to 359 (RLNTDLTFEN…GALRKVLAYA (217 aa)). Positions 187, 189, 190, and 191 each coordinate ATP. Residues 360–480 (RFHGRDVLTV…LHVLEQTLKG (121 aa)) form a domain IV, binds dsDNA region.

Belongs to the DnaA family. Oligomerizes as a right-handed, spiral filament on DNA at oriC.

Its subcellular location is the cytoplasm. In terms of biological role, plays an essential role in the initiation and regulation of chromosomal replication. ATP-DnaA binds to the origin of replication (oriC) to initiate formation of the DNA replication initiation complex once per cell cycle. Binds the DnaA box (a 9 base pair repeat at the origin) and separates the double-stranded (ds)DNA. Forms a right-handed helical filament on oriC DNA; dsDNA binds to the exterior of the filament while single-stranded (ss)DNA is stabiized in the filament's interior. The ATP-DnaA-oriC complex binds and stabilizes one strand of the AT-rich DNA unwinding element (DUE), permitting loading of DNA polymerase. After initiation quickly degrades to an ADP-DnaA complex that is not apt for DNA replication. Binds acidic phospholipids. In Bordetella bronchiseptica (strain ATCC BAA-588 / NCTC 13252 / RB50) (Alcaligenes bronchisepticus), this protein is Chromosomal replication initiator protein DnaA.